We begin with the raw amino-acid sequence, 265 residues long: Imidazole glycerol phosphate synthase subunit HisF (265 aa).

Residues Asp-11 and Asp-130 contribute to the active site.

Belongs to the HisA/HisF family. As to quaternary structure, heterodimer of HisH and HisF.

It localises to the cytoplasm. It carries out the reaction 5-[(5-phospho-1-deoxy-D-ribulos-1-ylimino)methylamino]-1-(5-phospho-beta-D-ribosyl)imidazole-4-carboxamide + L-glutamine = D-erythro-1-(imidazol-4-yl)glycerol 3-phosphate + 5-amino-1-(5-phospho-beta-D-ribosyl)imidazole-4-carboxamide + L-glutamate + H(+). It participates in amino-acid biosynthesis; L-histidine biosynthesis; L-histidine from 5-phospho-alpha-D-ribose 1-diphosphate: step 5/9. IGPS catalyzes the conversion of PRFAR and glutamine to IGP, AICAR and glutamate. The HisF subunit catalyzes the cyclization activity that produces IGP and AICAR from PRFAR using the ammonia provided by the HisH subunit. The chain is Imidazole glycerol phosphate synthase subunit HisF from Idiomarina loihiensis (strain ATCC BAA-735 / DSM 15497 / L2-TR).